We begin with the raw amino-acid sequence, 153 residues long: Arginine repressor (153 aa).

This sequence belongs to the ArgR family.

It is found in the cytoplasm. It functions in the pathway amino-acid biosynthesis; L-arginine biosynthesis [regulation]. In terms of biological role, regulates arginine biosynthesis genes. The protein is Arginine repressor of Actinobacillus pleuropneumoniae serotype 5b (strain L20).